Reading from the N-terminus, the 177-residue chain is Retrograde regulation protein 1 (177 aa).

The interval 1 to 24 is disordered; that stretch reads MSSIPAGTDPGSCGANFKNDRKRR. The 86-residue stretch at 11–96 folds into the bHLH domain; that stretch reads GSCGANFKND…TQAVEYISHL (86 aa). A phosphoserine mark is found at Ser50 and Ser52. 2 disordered regions span residues 52–82 and 147–177; these read SNDTLSESTPGALGLSSKAKGTGTKDGKPNK and LAATNDDSVRPPAKRLSSFEYGGYGEYGNGS. Position 60 is a phosphothreonine (Thr60). Over residues 168-177 the composition is skewed to gly residues; the sequence is GGYGEYGNGS.

In terms of assembly, binds DNA as a heterodimer with RTG3.

It localises to the nucleus. Required for a novel path of interorganelle communication between mitochondria, peroxisomes and the nucleus, thereby maintaining a functional metabolic interaction between the tricarboxylic acid and glyoxylate cycles. Transcription factor that regulates CIT2 gene expression. Binds to two identical sites oriented as inverted repeats 28 bp apart in a regulatory upstream activation sequence element (UASR) in the CIT2 promoter. The core binding site is 5'-GGTCAC-3'. The polypeptide is Retrograde regulation protein 1 (RTG1) (Saccharomyces cerevisiae (strain ATCC 204508 / S288c) (Baker's yeast)).